A 175-amino-acid polypeptide reads, in one-letter code: Signal peptidase complex catalytic subunit sec11 (175 aa).

Residues 1-14 lie on the Cytoplasmic side of the membrane; sequence MLSSLSSSITNARQ. Residues 15–31 traverse the membrane as a helical; Signal-anchor for type II membrane protein segment; sequence SIAQVLNFALVLSTAFM. The Lumenal portion of the chain corresponds to 32–175; that stretch reads MWKGLSVVSA…MGLMVMIQRE (144 aa). Active-site charge relay system residues include Ser-53, His-92, and Asp-117. The interval 161–172 is C-terminal short (CTS) helix; the sequence is VMLGLMGLMVMI.

Belongs to the peptidase S26B family. In terms of assembly, component of the signal peptidase complex (SPC) composed of a catalytic subunit SEC11 and three accessory subunits SPC1, SPC2 and SPC3. The complex induces a local thinning of the ER membrane which is used to measure the length of the signal peptide (SP) h-region of protein substrates. This ensures the selectivity of the complex towards h-regions shorter than 18-20 amino acids. SPC associates with the translocon complex.

It localises to the endoplasmic reticulum membrane. It carries out the reaction Cleavage of hydrophobic, N-terminal signal or leader sequences from secreted and periplasmic proteins.. Functionally, catalytic component of the signal peptidase complex (SPC) which catalyzes the cleavage of N-terminal signal sequences from nascent proteins as they are translocated into the lumen of the endoplasmic reticulum. Specifically cleaves N-terminal signal peptides that contain a hydrophobic alpha-helix (h-region) shorter than 18-20 amino acids. The chain is Signal peptidase complex catalytic subunit sec11 (sec11) from Penicillium rubens (strain ATCC 28089 / DSM 1075 / NRRL 1951 / Wisconsin 54-1255) (Penicillium chrysogenum).